We begin with the raw amino-acid sequence, 255 residues long: Leucyl/phenylalanyl-tRNA--protein transferase (255 aa).

It belongs to the L/F-transferase family.

The protein resides in the cytoplasm. It carries out the reaction N-terminal L-lysyl-[protein] + L-leucyl-tRNA(Leu) = N-terminal L-leucyl-L-lysyl-[protein] + tRNA(Leu) + H(+). The catalysed reaction is N-terminal L-arginyl-[protein] + L-leucyl-tRNA(Leu) = N-terminal L-leucyl-L-arginyl-[protein] + tRNA(Leu) + H(+). It catalyses the reaction L-phenylalanyl-tRNA(Phe) + an N-terminal L-alpha-aminoacyl-[protein] = an N-terminal L-phenylalanyl-L-alpha-aminoacyl-[protein] + tRNA(Phe). Its function is as follows. Functions in the N-end rule pathway of protein degradation where it conjugates Leu, Phe and, less efficiently, Met from aminoacyl-tRNAs to the N-termini of proteins containing an N-terminal arginine or lysine. This chain is Leucyl/phenylalanyl-tRNA--protein transferase, found in Burkholderia pseudomallei (strain 668).